Reading from the N-terminus, the 405-residue chain is uncharacterized protein (405 aa).

The signal sequence occupies residues 1–34 (MNKFLKYFLILLALVLIVVPIVFATLLFKTSQDA). A compositionally biased stretch (basic and acidic residues) spans 348-359 (EQNDTTDKDKTS). Positions 348–405 (EQNDTTDKDKTSNENSDSTNNSDSSNQQQPATDQNSNQNQGGTQQAPQASNNQNGVVN) are disordered. Composition is skewed to low complexity over residues 360–373 (NENS…DSSN) and 381–392 (QNSNQNQGGTQQ). The segment covering 393–405 (APQASNNQNGVVN) has biased composition (polar residues).

This sequence belongs to the LytR/CpsA/Psr (LCP) family.

This is an uncharacterized protein from Staphylococcus aureus (strain NCTC 8325 / PS 47).